The sequence spans 446 residues: Exodeoxyribonuclease 7 large subunit (446 aa).

It belongs to the XseA family. Heterooligomer composed of large and small subunits.

Its subcellular location is the cytoplasm. It catalyses the reaction Exonucleolytic cleavage in either 5'- to 3'- or 3'- to 5'-direction to yield nucleoside 5'-phosphates.. Functionally, bidirectionally degrades single-stranded DNA into large acid-insoluble oligonucleotides, which are then degraded further into small acid-soluble oligonucleotides. In Vibrio cholerae serotype O1 (strain ATCC 39315 / El Tor Inaba N16961), this protein is Exodeoxyribonuclease 7 large subunit.